The sequence spans 495 residues: Maternal protein exuperantia-1 (495 aa).

Disordered regions lie at residues Asp-197–Asp-217 and Thr-377–Asn-495. Polar residues-rich tracts occupy residues Glu-207–Asn-216 and Ala-398–Glu-414.

Functionally, ensures the proper localization of the mRNA of the bicoid gene to the anterior regions of the oocyte thus playing a fundamental role in the establishment of the polarity of the oocyte. May bind the bcd mRNA. This Drosophila pseudoobscura pseudoobscura (Fruit fly) protein is Maternal protein exuperantia-1 (exu1).